Reading from the N-terminus, the 342-residue chain is UHRF1-like protein (342 aa).

A disordered region spans residues 41 to 149; sequence SEATTLATPS…SHPGSEEEDI (109 aa). The span at 42–59 shows a compositional bias: polar residues; sequence EATTLATPSNLKTAGNQR. Positions 74–90 are enriched in basic and acidic residues; the sequence is NRSDSPRKRPTKDREDL. Residues 115–141 show a composition bias toward polar residues; that stretch reads TREQVTFNSDRDTPNTPSRQIKSTHSH. The YDG domain maps to 168–322; it reads GHIPGIGVGK…LMVCRYAFKR (155 aa). DNA is bound at residue Asp218. A disordered region spans residues 236-257; that stretch reads KGTKQNPKNLRTAPQTSHQSFD. Residues 238 to 257 show a composition bias toward polar residues; that stretch reads TKQNPKNLRTAPQTSHQSFD.

Its subcellular location is the nucleus. In terms of biological role, involved in the maintenance of DNA methylation. Binds hemimethylated DNA. The chain is UHRF1-like protein from Cryptococcus neoformans var. grubii serotype A (strain H99 / ATCC 208821 / CBS 10515 / FGSC 9487) (Filobasidiella neoformans var. grubii).